The chain runs to 184 residues: ATP synthase subunit b (184 aa).

A helical transmembrane segment spans residues 16–36 (LIPPIPELVIGLIAFVIVFGF).

Belongs to the ATPase B chain family. As to quaternary structure, F-type ATPases have 2 components, F(1) - the catalytic core - and F(0) - the membrane proton channel. F(1) has five subunits: alpha(3), beta(3), gamma(1), delta(1), epsilon(1). F(0) has three main subunits: a(1), b(2) and c(10-14). The alpha and beta chains form an alternating ring which encloses part of the gamma chain. F(1) is attached to F(0) by a central stalk formed by the gamma and epsilon chains, while a peripheral stalk is formed by the delta and b chains.

Its subcellular location is the cell membrane. In terms of biological role, f(1)F(0) ATP synthase produces ATP from ADP in the presence of a proton or sodium gradient. F-type ATPases consist of two structural domains, F(1) containing the extramembraneous catalytic core and F(0) containing the membrane proton channel, linked together by a central stalk and a peripheral stalk. During catalysis, ATP synthesis in the catalytic domain of F(1) is coupled via a rotary mechanism of the central stalk subunits to proton translocation. Component of the F(0) channel, it forms part of the peripheral stalk, linking F(1) to F(0). This is ATP synthase subunit b from Streptomyces coelicolor (strain ATCC BAA-471 / A3(2) / M145).